The primary structure comprises 323 residues: tRNA-cytidine(32) 2-sulfurtransferase (323 aa).

Residues 49-54 (SGGKDS) carry the PP-loop motif motif. [4Fe-4S] cluster-binding residues include Cys-124, Cys-127, and Cys-215.

It belongs to the TtcA family. In terms of assembly, homodimer. The cofactor is Mg(2+). [4Fe-4S] cluster serves as cofactor.

The protein localises to the cytoplasm. It carries out the reaction cytidine(32) in tRNA + S-sulfanyl-L-cysteinyl-[cysteine desulfurase] + AH2 + ATP = 2-thiocytidine(32) in tRNA + L-cysteinyl-[cysteine desulfurase] + A + AMP + diphosphate + H(+). It functions in the pathway tRNA modification. Catalyzes the ATP-dependent 2-thiolation of cytidine in position 32 of tRNA, to form 2-thiocytidine (s(2)C32). The sulfur atoms are provided by the cysteine/cysteine desulfurase (IscS) system. The chain is tRNA-cytidine(32) 2-sulfurtransferase from Shewanella denitrificans (strain OS217 / ATCC BAA-1090 / DSM 15013).